Here is a 314-residue protein sequence, read N- to C-terminus: Homoserine kinase (314 aa).

Residue 95 to 105 (PHSRGLGSSAA) participates in ATP binding.

It belongs to the GHMP kinase family. Homoserine kinase subfamily.

It localises to the cytoplasm. The enzyme catalyses L-homoserine + ATP = O-phospho-L-homoserine + ADP + H(+). The protein operates within amino-acid biosynthesis; L-threonine biosynthesis; L-threonine from L-aspartate: step 4/5. Functionally, catalyzes the ATP-dependent phosphorylation of L-homoserine to L-homoserine phosphate. This chain is Homoserine kinase, found in Mycobacterium sp. (strain JLS).